A 423-amino-acid polypeptide reads, in one-letter code: Dihydroorotase (423 aa).

Residues histidine 56 and histidine 58 each coordinate Zn(2+). Substrate is bound by residues 58-60 and asparagine 89; that span reads HFR. Zn(2+)-binding residues include lysine 137, histidine 168, histidine 227, and aspartate 302. Lysine 137 carries the post-translational modification N6-carboxylysine. The active site involves aspartate 302. A substrate-binding site is contributed by histidine 306.

It belongs to the metallo-dependent hydrolases superfamily. DHOase family. Class I DHOase subfamily. Zn(2+) serves as cofactor.

The catalysed reaction is (S)-dihydroorotate + H2O = N-carbamoyl-L-aspartate + H(+). It participates in pyrimidine metabolism; UMP biosynthesis via de novo pathway; (S)-dihydroorotate from bicarbonate: step 3/3. Its function is as follows. Catalyzes the reversible cyclization of carbamoyl aspartate to dihydroorotate. The polypeptide is Dihydroorotase (Methanocaldococcus jannaschii (strain ATCC 43067 / DSM 2661 / JAL-1 / JCM 10045 / NBRC 100440) (Methanococcus jannaschii)).